The chain runs to 228 residues: LHFPL tetraspan subfamily member 2 protein (228 aa).

Helical transmembrane passes span 11 to 31 (MLWT…FMSA), 102 to 122 (IFLA…VFTM), 132 to 152 (IFNV…LGLI), and 181 to 201 (LGWA…CAVF).

It belongs to the LHFP family. As to expression, expressed in all tissues and cell lines examined except brain and peripheral blood leukocytes.

The protein localises to the membrane. Functionally, plays a role in female and male fertility. Involved in distal reproductive tract development. This chain is LHFPL tetraspan subfamily member 2 protein, found in Homo sapiens (Human).